A 372-amino-acid polypeptide reads, in one-letter code: Putative glutamate--cysteine ligase 2 (372 aa).

The protein belongs to the glutamate--cysteine ligase type 2 family. YbdK subfamily. As to quaternary structure, homodimer.

The catalysed reaction is L-cysteine + L-glutamate + ATP = gamma-L-glutamyl-L-cysteine + ADP + phosphate + H(+). ATP-dependent carboxylate-amine ligase which exhibits weak glutamate--cysteine ligase activity. In Escherichia coli O81 (strain ED1a), this protein is Putative glutamate--cysteine ligase 2 (ybdK).